The primary structure comprises 264 residues: MFENLNTALTPKLQSSRSFPHLSRPTAPSAAAQGSVEPGGPGLWVGSSQHLKSLGKAVGAKVNDFLRRKEPSSLGSVGTTEVNKTAGAQLAGGADGDDGRSALQEAFPRLDPPPPATRKRTPRALKTTQDMLISSQPVLSSLEYGTELSSGQPQVSSSAQPSPADASQPEATTEVVDRDDALPNGEVSVSVPDLIHKDGQDDPKLKVTECRRASSPGLMERNGLKLSLSPISLAESPEDGSPPPRARTSSVDNEGPHPDLLSFE.

3 stretches are compositionally biased toward polar residues: residues 1–18 (MFEN…SSRS), 73–83 (SLGSVGTTEVN), and 126–139 (KTTQ…QPVL). Disordered stretches follow at residues 1 to 47 (MFEN…WVGS) and 68 to 264 (RKEP…LSFE). The segment covering 149-171 (SSGQPQVSSSAQPSPADASQPEA) has biased composition (low complexity). The segment covering 194–212 (LIHKDGQDDPKLKVTECRR) has biased composition (basic and acidic residues). Phosphoserine is present on residues Ser-214, Ser-215, Ser-241, and Ser-250.

This is an uncharacterized protein from Bos taurus (Bovine).